The following is a 374-amino-acid chain: Ribosomal RNA large subunit methyltransferase G (374 aa).

This sequence belongs to the methyltransferase superfamily. RlmG family.

The protein localises to the cytoplasm. The catalysed reaction is guanosine(1835) in 23S rRNA + S-adenosyl-L-methionine = N(2)-methylguanosine(1835) in 23S rRNA + S-adenosyl-L-homocysteine + H(+). Functionally, specifically methylates the guanine in position 1835 (m2G1835) of 23S rRNA. This Pseudomonas aeruginosa (strain UCBPP-PA14) protein is Ribosomal RNA large subunit methyltransferase G.